An 821-amino-acid polypeptide reads, in one-letter code: DNA ligase (821 aa).

Residues 33–37 (DVDYD), 82–83 (SL), and Glu113 each bind NAD(+). The active-site N6-AMP-lysine intermediate is the Lys115. NAD(+) is bound by residues Arg136, Glu173, Lys290, and Lys314. The Zn(2+) site is built by Cys408, Cys411, Cys426, and Cys432. Residues 741-821 (IVAGPLDGQT…RLLAYLAEHE (81 aa)) enclose the BRCT domain.

This sequence belongs to the NAD-dependent DNA ligase family. LigA subfamily. It depends on Mg(2+) as a cofactor. Requires Mn(2+) as cofactor.

It carries out the reaction NAD(+) + (deoxyribonucleotide)n-3'-hydroxyl + 5'-phospho-(deoxyribonucleotide)m = (deoxyribonucleotide)n+m + AMP + beta-nicotinamide D-nucleotide.. Functionally, DNA ligase that catalyzes the formation of phosphodiester linkages between 5'-phosphoryl and 3'-hydroxyl groups in double-stranded DNA using NAD as a coenzyme and as the energy source for the reaction. It is essential for DNA replication and repair of damaged DNA. This is DNA ligase from Stenotrophomonas maltophilia (strain R551-3).